A 373-amino-acid chain; its full sequence is D-alanine--D-alanine ligase (373 aa).

One can recognise an ATP-grasp domain in the interval 156 to 363 (KKLLAAEGLP…YPTLLAAMVD (208 aa)). 184–239 (RERLGLPVFVKPARGGSSIGVSRVTAWDELPAAVALARRHDPKVIVEAAVIGRELE) serves as a coordination point for ATP. Residues Asp-318, Glu-330, and Asn-332 each contribute to the Mg(2+) site.

The protein belongs to the D-alanine--D-alanine ligase family. It depends on Mg(2+) as a cofactor. The cofactor is Mn(2+).

It localises to the cytoplasm. The enzyme catalyses 2 D-alanine + ATP = D-alanyl-D-alanine + ADP + phosphate + H(+). The protein operates within cell wall biogenesis; peptidoglycan biosynthesis. Functionally, cell wall formation. This chain is D-alanine--D-alanine ligase, found in Mycolicibacterium smegmatis (strain ATCC 700084 / mc(2)155) (Mycobacterium smegmatis).